Here is a 303-residue protein sequence, read N- to C-terminus: Porphobilinogen deaminase (303 aa).

Cys240 is subject to S-(dipyrrolylmethanemethyl)cysteine.

This sequence belongs to the HMBS family. As to quaternary structure, monomer. The cofactor is dipyrromethane.

The enzyme catalyses 4 porphobilinogen + H2O = hydroxymethylbilane + 4 NH4(+). Its pathway is porphyrin-containing compound metabolism; protoporphyrin-IX biosynthesis; coproporphyrinogen-III from 5-aminolevulinate: step 2/4. Functionally, tetrapolymerization of the monopyrrole PBG into the hydroxymethylbilane pre-uroporphyrinogen in several discrete steps. This chain is Porphobilinogen deaminase, found in Stenotrophomonas maltophilia (strain K279a).